Here is a 317-residue protein sequence, read N- to C-terminus: L-lactate dehydrogenase (317 aa).

Residues Val-17, Asp-38, Lys-43, Tyr-68, and 82–83 (GV) contribute to the NAD(+) site. Arg-91 contributes to the substrate binding site. NAD(+) is bound by residues Ser-104, 121 to 123 (VSN), and Ser-146. Position 123-126 (123-126 (NPVD)) interacts with substrate. Substrate is bound at residue 151-154 (DTSR). Beta-D-fructose 1,6-bisphosphate-binding residues include Lys-156 and His-171. The Proton acceptor role is filled by His-178. Position 224 is a phosphotyrosine (Tyr-224). A substrate-binding site is contributed by Thr-233.

It belongs to the LDH/MDH superfamily. LDH family. As to quaternary structure, homotetramer.

It is found in the cytoplasm. It catalyses the reaction (S)-lactate + NAD(+) = pyruvate + NADH + H(+). It participates in fermentation; pyruvate fermentation to lactate; (S)-lactate from pyruvate: step 1/1. Its activity is regulated as follows. Allosterically activated by fructose 1,6-bisphosphate (FBP). In terms of biological role, catalyzes the conversion of lactate to pyruvate. In Clostridium perfringens (strain SM101 / Type A), this protein is L-lactate dehydrogenase.